A 593-amino-acid chain; its full sequence is MTADSALYIPPYKADDQDIVVELNSRFGAETFTVQPTRTGMPVLWVPRERLIEVLTFLRQVPKPYVMLYDLHGVDERLRTHRRGLPSADFSVFYHLMSLERNSDVMIKVALSERDLNLPTATRIWPNANWYEREVWDMYGITFTGHPHLTRMLMPPTWQGHPLRKDYPARATEFDPYSLSAAKQDLEQEALRFKPEDWGMKRHGENEDYMFLNLGPNHPSAHGAFRIILQLDGEEIIDCVPEIGYHHRGAEKMAERQSWHSFIPYTDRIDYLGGVMNNLPYVLSVEKLAGIKVPQRVDVIRIMMAEFFRILNHLLYLGTYIQDVGAMTPVFFTFTDRQRAYKVVEAITGFRLHPAWYRIGGVAHDLPRGWDKLVREFLDWMPKRLDEYETAALKNSILRGRTIGVAQYNTKEALEWGTTGAGLRATGCDFDLRKARPYSGYENFEFEVPLAHNGDAYDRCMVKMGEMRQSLRIIEQCLKNMPEGPYKADHPLTTPPPKERTLQHIETLITHFLQVSWGPVMPANEAFQMIEATKGINSYYLTSDGSTMSYRTRIRTPSFAHLQQIPSVINGSMIADLIAYLGSIDFVMADVDR.

The NADH dehydrogenase I subunit C stretch occupies residues 1 to 184 (MTADSALYIP…DPYSLSAAKQ (184 aa)). The segment at 208–593 (DYMFLNLGPN…IDFVMADVDR (386 aa)) is NADH dehydrogenase I subunit D.

The protein in the N-terminal section; belongs to the complex I 30 kDa subunit family. This sequence in the C-terminal section; belongs to the complex I 49 kDa subunit family. NDH-1 is composed of 13 different subunits. Subunits NuoB, CD, E, F, and G constitute the peripheral sector of the complex.

The protein localises to the cell inner membrane. The catalysed reaction is a quinone + NADH + 5 H(+)(in) = a quinol + NAD(+) + 4 H(+)(out). In terms of biological role, NDH-1 shuttles electrons from NADH, via FMN and iron-sulfur (Fe-S) centers, to quinones in the respiratory chain. The immediate electron acceptor for the enzyme in this species is believed to be ubiquinone. Couples the redox reaction to proton translocation (for every two electrons transferred, four hydrogen ions are translocated across the cytoplasmic membrane), and thus conserves the redox energy in a proton gradient. This Pseudomonas aeruginosa (strain UCBPP-PA14) protein is NADH-quinone oxidoreductase subunit C/D.